The primary structure comprises 753 residues: Taperin (753 aa).

The tract at residues 141-348 (FDSPAAPRRR…IRPSSKPDME (208 aa)) is disordered. Over residues 182-197 (PAPPVLPSQPAPPISP) the composition is skewed to pro residues. Composition is skewed to polar residues over residues 230-239 (LQKTGSNSFT) and 250-263 (VNRS…TQES). A Phosphoserine modification is found at S274. A compositionally biased stretch (low complexity) spans 300–322 (TPSATPVGPPAFLAPSPASATPS). Residues 323–335 (QRQWVSSATSAND) show a composition bias toward polar residues. Basic and acidic residues predominate over residues 337 to 347 (FEIRPSSKPDM). 3 positions are modified to phosphoserine: S402, S458, and S502. Positions 438–488 (GCPRPAISDTDKSVRRQRPASPPPFLPATTEAEPAEGLGVPGLTKNGQEPV) are disordered. 2 disordered regions span residues 544–583 (FTVV…SGPH) and 637–676 (FEYP…DSEK). A compositionally biased stretch (polar residues) spans 559–571 (HLSQTNGQFQQGA). The span at 648–672 (EEAEEEEEEEEEEEGEDGEEEEVGP) shows a compositional bias: acidic residues.

It belongs to the taperin family. As to quaternary structure, interacts with GRXCR2; the interaction restricts TPRN to the stereocilum basal region. Interacts with actin ACTB; the interaction may stabilize stereocilia. Interacts with CLIC5. Interacts with PTPRQ. TPRN, CLIC5 and PTPQR form concentric rings at the base of stereocilia and may form a complex. Interacts with phosphatase PPP1CA; the interaction results in inhibition of PPC1A phosphatase activity. Interacts with DNA damage response proteins XRCC6/KU70, XRCC5/KU80, PARP1, TOP1 and TOP2A; these interactions recruit TPRN to sites of DNA damage where it may play a role in DNA repair.

Its subcellular location is the cell projection. The protein localises to the stereocilium. The protein resides in the microvillus. It is found in the nucleus. It localises to the nucleoplasm. Its subcellular location is the cytoplasm. Functionally, essential for hearing. Required for maintenance of stereocilia on both inner and outer hair cells. Necessary for the integrity of the stereociliary rootlet. May act as an actin cytoskeleton regulator involved in the regulation of actin dynamics at the pointed end in hair cells. Forms rings at the base of stereocilia and binds actin filaments in the stereocilia which may stabilize the stereocilia. Acts as a strong inhibitor of PPP1CA phosphatase activity. Recruited to sites of DNA damage and may play a role in DNA damage repair. The chain is Taperin (Tprn) from Rattus norvegicus (Rat).